Reading from the N-terminus, the 370-residue chain is 3-dehydroquinate synthase (370 aa).

Residues 108-112 (GVIGD), 132-133 (TT), lysine 145, and lysine 154 contribute to the NAD(+) site. Residues glutamate 187, histidine 249, and histidine 267 each coordinate Zn(2+).

Belongs to the sugar phosphate cyclases superfamily. Dehydroquinate synthase family. Co(2+) serves as cofactor. Requires Zn(2+) as cofactor. The cofactor is NAD(+).

It localises to the cytoplasm. The enzyme catalyses 7-phospho-2-dehydro-3-deoxy-D-arabino-heptonate = 3-dehydroquinate + phosphate. It functions in the pathway metabolic intermediate biosynthesis; chorismate biosynthesis; chorismate from D-erythrose 4-phosphate and phosphoenolpyruvate: step 2/7. Its function is as follows. Catalyzes the conversion of 3-deoxy-D-arabino-heptulosonate 7-phosphate (DAHP) to dehydroquinate (DHQ). This chain is 3-dehydroquinate synthase, found in Cereibacter sphaeroides (strain ATCC 17023 / DSM 158 / JCM 6121 / CCUG 31486 / LMG 2827 / NBRC 12203 / NCIMB 8253 / ATH 2.4.1.) (Rhodobacter sphaeroides).